A 319-amino-acid polypeptide reads, in one-letter code: GTP cyclohydrolase MptA (319 aa).

It belongs to the GTP cyclohydrolase IV family. Homodimer. Fe(2+) is required as a cofactor.

The catalysed reaction is GTP + H2O = 7,8-dihydroneopterin 2',3'-cyclic phosphate + formate + diphosphate + H(+). The protein operates within cofactor biosynthesis; 5,6,7,8-tetrahydromethanopterin biosynthesis. Its function is as follows. Converts GTP to 7,8-dihydro-D-neopterin 2',3'-cyclic phosphate, the first intermediate in the biosynthesis of coenzyme methanopterin. The sequence is that of GTP cyclohydrolase MptA from Methanosarcina barkeri (strain Fusaro / DSM 804).